Here is a 197-residue protein sequence, read N- to C-terminus: Holliday junction branch migration complex subunit RuvA (197 aa).

The tract at residues Met-1–Arg-63 is domain I. The interval Ser-64–Ile-142 is domain II. Residues Ala-143–Ser-147 are flexible linker. Residues Ala-148–Lys-197 form a domain III region.

This sequence belongs to the RuvA family. As to quaternary structure, homotetramer. Forms an RuvA(8)-RuvB(12)-Holliday junction (HJ) complex. HJ DNA is sandwiched between 2 RuvA tetramers; dsDNA enters through RuvA and exits via RuvB. An RuvB hexamer assembles on each DNA strand where it exits the tetramer. Each RuvB hexamer is contacted by two RuvA subunits (via domain III) on 2 adjacent RuvB subunits; this complex drives branch migration. In the full resolvosome a probable DNA-RuvA(4)-RuvB(12)-RuvC(2) complex forms which resolves the HJ.

It is found in the cytoplasm. The RuvA-RuvB-RuvC complex processes Holliday junction (HJ) DNA during genetic recombination and DNA repair, while the RuvA-RuvB complex plays an important role in the rescue of blocked DNA replication forks via replication fork reversal (RFR). RuvA specifically binds to HJ cruciform DNA, conferring on it an open structure. The RuvB hexamer acts as an ATP-dependent pump, pulling dsDNA into and through the RuvAB complex. HJ branch migration allows RuvC to scan DNA until it finds its consensus sequence, where it cleaves and resolves the cruciform DNA. This is Holliday junction branch migration complex subunit RuvA from Streptococcus pneumoniae (strain Taiwan19F-14).